We begin with the raw amino-acid sequence, 551 residues long: Arginine--tRNA ligase (551 aa).

A 'HIGH' region motif is present at residues 125 to 135 (ANPTGPLHIGH).

Belongs to the class-I aminoacyl-tRNA synthetase family. Monomer.

Its subcellular location is the cytoplasm. It carries out the reaction tRNA(Arg) + L-arginine + ATP = L-arginyl-tRNA(Arg) + AMP + diphosphate. The chain is Arginine--tRNA ligase from Nitratidesulfovibrio vulgaris (strain DSM 19637 / Miyazaki F) (Desulfovibrio vulgaris).